A 98-amino-acid polypeptide reads, in one-letter code: ESAT-6-like protein EsxK (98 aa).

The protein belongs to the WXG100 family. CFP-10 subfamily. Strongly interacts with EsxL to form a heterodimeric complex under reducing conditions. The complex is regulated by the redox state of EsxL.

The protein resides in the secreted. This is ESAT-6-like protein EsxK from Mycobacterium tuberculosis (strain ATCC 25618 / H37Rv).